The sequence spans 272 residues: HMP-PP phosphatase (272 aa).

The active-site Nucleophile is Asp8. Asp8, Asp10, and Asp212 together coordinate Mg(2+).

It belongs to the HAD-like hydrolase superfamily. Cof family. Requires Mg(2+) as cofactor.

The catalysed reaction is 4-amino-2-methyl-5-(diphosphooxymethyl)pyrimidine + H2O = 4-amino-2-methyl-5-(phosphooxymethyl)pyrimidine + phosphate + H(+). Catalyzes the hydrolysis of 4-amino-2-methyl-5-hydroxymethylpyrimidine pyrophosphate (HMP-PP) to 4-amino-2-methyl-5-hydroxymethylpyrimidine phosphate (HMP-P). The polypeptide is HMP-PP phosphatase (Escherichia coli O81 (strain ED1a)).